A 248-amino-acid chain; its full sequence is MTSQPVPNETIIVLPSNVINFSQAEKPEPTNQGQDSLKKHLHAEIKVIGTIQILCGMMVLSLGIILASASFSPNFTQVTSTLLNSAYPFIGPFFFIISGSLSIATEKRLTKLLVHSSLVGSILSALSALVGFIILSVKQATLNPASLQCELDKNNIPTRSYVSYFYHDSLYTTDCYTAKASLAGTLSLMLICTLLEFCLAVLTAVLRWKQAYSDFPGSVLFLPHSYIGNSGMSSKMTHDCGYEELLTS.

Residues 1–46 lie on the Cytoplasmic side of the membrane; the sequence is MTSQPVPNETIIVLPSNVINFSQAEKPEPTNQGQDSLKKHLHAEIK. The helical transmembrane segment at 47 to 67 threads the bilayer; it reads VIGTIQILCGMMVLSLGIILA. The Extracellular segment spans residues 68–84; it reads SASFSPNFTQVTSTLLN. Residues 85–105 form a helical membrane-spanning segment; sequence SAYPFIGPFFFIISGSLSIAT. At 106–116 the chain is on the cytoplasmic side; sequence EKRLTKLLVHS. A helical transmembrane segment spans residues 117–137; sequence SLVGSILSALSALVGFIILSV. The Extracellular segment spans residues 138–185; it reads KQATLNPASLQCELDKNNIPTRSYVSYFYHDSLYTTDCYTAKASLAGT. Residues 186–206 traverse the membrane as a helical segment; it reads LSLMLICTLLEFCLAVLTAVL. At 207–248 the chain is on the cytoplasmic side; it reads RWKQAYSDFPGSVLFLPHSYIGNSGMSSKMTHDCGYEELLTS.

It belongs to the MS4A family. In terms of tissue distribution, variable expression in some B-cell, myelomonocytic, and erythroleukemia cell lines.

Its subcellular location is the membrane. Functionally, may be involved in signal transduction as a component of a multimeric receptor complex. This Homo sapiens (Human) protein is Membrane-spanning 4-domains subfamily A member 6A (MS4A6A).